A 317-amino-acid chain; its full sequence is Acetyl-coenzyme A carboxylase carboxyl transferase subunit alpha (317 aa).

A CoA carboxyltransferase C-terminal domain is found at 40–293; the sequence is LEKRSADALK…GDIIAASLRS (254 aa).

This sequence belongs to the AccA family. Acetyl-CoA carboxylase is a heterohexamer composed of biotin carboxyl carrier protein (AccB), biotin carboxylase (AccC) and two subunits each of ACCase subunit alpha (AccA) and ACCase subunit beta (AccD).

Its subcellular location is the cytoplasm. It catalyses the reaction N(6)-carboxybiotinyl-L-lysyl-[protein] + acetyl-CoA = N(6)-biotinyl-L-lysyl-[protein] + malonyl-CoA. Its pathway is lipid metabolism; malonyl-CoA biosynthesis; malonyl-CoA from acetyl-CoA: step 1/1. Functionally, component of the acetyl coenzyme A carboxylase (ACC) complex. First, biotin carboxylase catalyzes the carboxylation of biotin on its carrier protein (BCCP) and then the CO(2) group is transferred by the carboxyltransferase to acetyl-CoA to form malonyl-CoA. The chain is Acetyl-coenzyme A carboxylase carboxyl transferase subunit alpha from Brucella abortus (strain S19).